The chain runs to 304 residues: Methionyl-tRNA formyltransferase (304 aa).

Position 106–109 (106–109 (SLLP)) interacts with (6S)-5,6,7,8-tetrahydrofolate.

Belongs to the Fmt family.

The catalysed reaction is L-methionyl-tRNA(fMet) + (6R)-10-formyltetrahydrofolate = N-formyl-L-methionyl-tRNA(fMet) + (6S)-5,6,7,8-tetrahydrofolate + H(+). Its function is as follows. Attaches a formyl group to the free amino group of methionyl-tRNA(fMet). The formyl group appears to play a dual role in the initiator identity of N-formylmethionyl-tRNA by promoting its recognition by IF2 and preventing the misappropriation of this tRNA by the elongation apparatus. This chain is Methionyl-tRNA formyltransferase, found in Thermosipho africanus (strain TCF52B).